Reading from the N-terminus, the 452-residue chain is Phosphoglucosamine mutase (452 aa).

Ser-103 (phosphoserine intermediate) is an active-site residue. 4 residues coordinate Mg(2+): Ser-103, Asp-243, Asp-245, and Asp-247. The residue at position 103 (Ser-103) is a Phosphoserine.

It belongs to the phosphohexose mutase family. It depends on Mg(2+) as a cofactor. Post-translationally, activated by phosphorylation.

The enzyme catalyses alpha-D-glucosamine 1-phosphate = D-glucosamine 6-phosphate. Functionally, catalyzes the conversion of glucosamine-6-phosphate to glucosamine-1-phosphate. The protein is Phosphoglucosamine mutase of Exiguobacterium sp. (strain ATCC BAA-1283 / AT1b).